The sequence spans 448 residues: Probable glycine dehydrogenase (decarboxylating) subunit 1 (448 aa).

This sequence belongs to the GcvP family. N-terminal subunit subfamily. As to quaternary structure, the glycine cleavage system is composed of four proteins: P, T, L and H. In this organism, the P 'protein' is a heterodimer of two subunits.

The catalysed reaction is N(6)-[(R)-lipoyl]-L-lysyl-[glycine-cleavage complex H protein] + glycine + H(+) = N(6)-[(R)-S(8)-aminomethyldihydrolipoyl]-L-lysyl-[glycine-cleavage complex H protein] + CO2. The glycine cleavage system catalyzes the degradation of glycine. The P protein binds the alpha-amino group of glycine through its pyridoxal phosphate cofactor; CO(2) is released and the remaining methylamine moiety is then transferred to the lipoamide cofactor of the H protein. The chain is Probable glycine dehydrogenase (decarboxylating) subunit 1 from Listeria monocytogenes serovar 1/2a (strain ATCC BAA-679 / EGD-e).